The sequence spans 564 residues: Arginine--tRNA ligase (564 aa).

Residues 130–140 (ANPTGSLHIGH) carry the 'HIGH' region motif.

This sequence belongs to the class-I aminoacyl-tRNA synthetase family. As to quaternary structure, monomer.

Its subcellular location is the cytoplasm. It carries out the reaction tRNA(Arg) + L-arginine + ATP = L-arginyl-tRNA(Arg) + AMP + diphosphate. The sequence is that of Arginine--tRNA ligase from Malacoplasma penetrans (strain HF-2) (Mycoplasma penetrans).